Here is a 3459-residue protein sequence, read N- to C-terminus: uncharacterized protein (3459 aa).

Residues 158–167 (NDDDWIFNED) are compositionally biased toward acidic residues. Disordered regions lie at residues 158 to 230 (NDDD…NNNN) and 400 to 447 (YGYI…NDEK). The segment covering 168–184 (DEKKNKNNDGNDNRYDY) has biased composition (basic and acidic residues). The segment covering 185–201 (NDLQNNNNNDNNKYDYN) has biased composition (low complexity). Residues 204 to 221 (DDEKKNKNNDGDDNKYDY) are compositionally biased toward basic and acidic residues. Acidic residues predominate over residues 406–443 (DNDDGDDYNDDNDNDDNYNDDNYNDDNYNDDNYNDDNY). Residues 771–851 (VNEKKKGENE…NEMNKDEENE (81 aa)) are a coiled coil. Residues 1059–1079 (LIYMIYLFFTYKKYDLLLMFI) form a helical membrane-spanning segment. Disordered regions lie at residues 1148–1187 (RRQEKVLNNKDNNDKNDKNDKNDKNDKNDKNEKNEKNDYD), 1399–1467 (IPTQ…NDDD), and 1711–1733 (QKKKGNNQKQNHNYNDDINNKEN). Residues 1404-1463 (DKNETDEGNKNETDEGDKNETDEGDKNETDEGNKNETEEIYKNETDEGNKNETEEIYKND) show a composition bias toward basic and acidic residues. Transmembrane regions (helical) follow at residues 2059–2079 (FLLFQMSLSNCFYIMNNIFFF) and 2197–2217 (IIQCTTYMFLLFFIFSTDFLF). Disordered regions lie at residues 2582–2644 (IYKD…DNNN) and 2776–2835 (GRIW…DKGD). Residues 2592–2629 (DNNDDDNINDDDNINDDDNINDDDNNNDDDNNNDDNND) show a composition bias toward acidic residues. The span at 2779–2821 (WKREENGEKKKNEKNESEKNERNEKNEKNEKHEKHEKHEKNEK) shows a compositional bias: basic and acidic residues. Positions 2785–2820 (GEKKKNEKNESEKNERNEKNEKNEKHEKHEKHEKNE) form a coiled coil. The next 2 membrane-spanning stretches (helical) occupy residues 3229 to 3249 (LFIIKEYNNIFLYIYMLSFIL) and 3296 to 3316 (LLFFFNYIFEQIILFVININS).

It localises to the membrane. This is an uncharacterized protein from Plasmodium falciparum (isolate 3D7).